The chain runs to 886 residues: Probable mixed-linked glucan synthase 8 (886 aa).

A run of 2 helical transmembrane segments spans residues 87–107 and 118–138; these read ILLHPYRLLTLVRLVAIVLFF and GMFFWWISVIGDFWFGVSWLL. Asp213 is an active-site residue. Residues Asp413 and Asp415 each contribute to the substrate site. The active site involves Asp577. 6 helical membrane-spanning segments follow: residues 659–679, 683–703, 723–743, 775–795, 812–832, and 840–860; these read VFLLFYLLFPVIWIFRGIFYI, FPTYVLYLVIVIFMSEMIGMV, IIGATAVYPLAVLHIVLKCFG, LLFPTIVVIAVNICAIGAAIG, LGLVFNVWILLLIYPFALGIM, and YILFVLIVISFVIIALADIAI.

This sequence belongs to the glycosyltransferase 2 family. Plant cellulose synthase-like F subfamily.

Its subcellular location is the golgi apparatus membrane. May catalyze both beta-1,3 and beta-1,4 glycosidic linkage on beta-D-glucan. Essential for (1,3;1,4)-beta-D-glucans synthesis in grasses and cereals (Poaceae). The mixed-linked glucans (which are not present in walls of dicotyledons or most other monocotyledonous plants) are particularly important constituents of the walls of the starchy endosperm and aleurone cells of cereal grains such as oats, wheat, rice and barley. They can account for up to 70% by weight of the wall. The chain is Probable mixed-linked glucan synthase 8 (CSFL8) from Oryza sativa subsp. japonica (Rice).